The chain runs to 192 residues: Bifunctional protein PyrR (192 aa).

The PRPP-binding signature appears at 107–119 (VVLVDDVLFSGRT).

This sequence belongs to the purine/pyrimidine phosphoribosyltransferase family. PyrR subfamily.

It catalyses the reaction UMP + diphosphate = 5-phospho-alpha-D-ribose 1-diphosphate + uracil. Its function is as follows. Regulates the transcription of the pyrimidine nucleotide (pyr) operon in response to exogenous pyrimidines. Also displays a weak uracil phosphoribosyltransferase activity which is not physiologically significant. The chain is Bifunctional protein PyrR from Corynebacterium efficiens (strain DSM 44549 / YS-314 / AJ 12310 / JCM 11189 / NBRC 100395).